A 443-amino-acid chain; its full sequence is Zinc finger CCCH domain-containing protein 63 (443 aa).

2 disordered regions span residues 1–29 (MDFD…MAPT) and 56–99 (LPGP…SSSW). 2 C3H1-type zinc fingers span residues 30 to 56 (DTRQ…HREL) and 109 to 136 (TKTE…HCWS). 6 WD repeats span residues 149–190 (GHEK…GVLK), 228–265 (GPVG…NCFE), 272–311 (GHTL…QTLT), 313–349 (HSSV…NLEV), 354–396 (KEEH…LFIR), and 404–442 (FAKQ…TAAL).

The chain is Zinc finger CCCH domain-containing protein 63 (ZFWD2) from Arabidopsis thaliana (Mouse-ear cress).